The chain runs to 115 residues: MPHTSVKKTKTNINQQKYIENWEGYEHVKRKLIKLRMKYKCSSNSLKRICGGEELIHNTLSAMNGNTYKIKHVVIDPSTPVVYNLKRHNHLSAYITRKYNFSPFLVEKTKDDLFM.

This is an uncharacterized protein from Dictyostelium discoideum (Social amoeba).